The chain runs to 188 residues: Protein CRIPTO3 (188 aa).

An EGF-like domain is found at 78–107 (LNRTCCLNGGTCMLESFCACPPSFYGRNCE). N-linked (GlcNAc...) asparagine glycosylation is present at asparagine 79. Cystine bridges form between cysteine 82–cysteine 89, cysteine 83–cysteine 95, cysteine 97–cysteine 106, cysteine 115–cysteine 133, cysteine 128–cysteine 149, and cysteine 131–cysteine 140.

The protein belongs to the EGF-CFC (Cripto-1/FRL1/Cryptic) family. In terms of tissue distribution, expressed weakly in lung, colon and breast. Expressed also strongly in primary cancer tissues; lung and colon cancers.

Its subcellular location is the cell membrane. In terms of biological role, could play a role in the determination of the epiblastic cells that subsequently give rise to the mesoderm. Activates the Nodal-dependent signaling pathway. The chain is Protein CRIPTO3 from Homo sapiens (Human).